Consider the following 354-residue polypeptide: Serine/threonine-protein kinase ppk34 (354 aa).

Positions 40–331 (YRLKNMLGYG…IEELLRDPFL (292 aa)) constitute a Protein kinase domain. ATP is bound by residues 46 to 54 (LGYGACSTV) and K69. The active-site Proton acceptor is D200.

The protein belongs to the protein kinase superfamily. Ser/Thr protein kinase family.

The protein resides in the cytoplasm. Its subcellular location is the nucleus. It catalyses the reaction L-seryl-[protein] + ATP = O-phospho-L-seryl-[protein] + ADP + H(+). The catalysed reaction is L-threonyl-[protein] + ATP = O-phospho-L-threonyl-[protein] + ADP + H(+). This is Serine/threonine-protein kinase ppk34 (ppk34) from Schizosaccharomyces pombe (strain 972 / ATCC 24843) (Fission yeast).